We begin with the raw amino-acid sequence, 241 residues long: Carboxy-S-adenosyl-L-methionine synthase 1 (241 aa).

S-adenosyl-L-methionine is bound by residues tyrosine 37, 61–63, asparagine 131, and arginine 198; that span reads GCS.

The protein belongs to the class I-like SAM-binding methyltransferase superfamily. Cx-SAM synthase family. Homodimer.

The enzyme catalyses prephenate + S-adenosyl-L-methionine = carboxy-S-adenosyl-L-methionine + 3-phenylpyruvate + H2O. Its function is as follows. Catalyzes the conversion of S-adenosyl-L-methionine (SAM) to carboxy-S-adenosyl-L-methionine (Cx-SAM). This Yersinia pseudotuberculosis serotype IB (strain PB1/+) protein is Carboxy-S-adenosyl-L-methionine synthase 1.